The primary structure comprises 241 residues: Glucosamine-6-phosphate deaminase (241 aa).

Asp-67 serves as the catalytic Proton acceptor; for enolization step. Asn-136 functions as the For ring-opening step in the catalytic mechanism. His-138 (proton acceptor; for ring-opening step) is an active-site residue. Glu-143 serves as the catalytic For ring-opening step.

This sequence belongs to the glucosamine/galactosamine-6-phosphate isomerase family. NagB subfamily.

It catalyses the reaction alpha-D-glucosamine 6-phosphate + H2O = beta-D-fructose 6-phosphate + NH4(+). It functions in the pathway amino-sugar metabolism; N-acetylneuraminate degradation; D-fructose 6-phosphate from N-acetylneuraminate: step 5/5. Functionally, catalyzes the reversible isomerization-deamination of glucosamine 6-phosphate (GlcN6P) to form fructose 6-phosphate (Fru6P) and ammonium ion. The protein is Glucosamine-6-phosphate deaminase of Bacillus velezensis (strain DSM 23117 / BGSC 10A6 / LMG 26770 / FZB42) (Bacillus amyloliquefaciens subsp. plantarum).